Consider the following 249-residue polypeptide: Probable transcriptional regulatory protein Strop_1792 (249 aa).

The protein belongs to the TACO1 family.

The protein localises to the cytoplasm. This Salinispora tropica (strain ATCC BAA-916 / DSM 44818 / JCM 13857 / NBRC 105044 / CNB-440) protein is Probable transcriptional regulatory protein Strop_1792.